We begin with the raw amino-acid sequence, 205 residues long: MSILTYSGGSCLAMAGKECFVVISDNRLGEQLKTISMEVPKLHVINDGIVMGLTGLRTDQQTFAQKVNFRTEMYKLREERDINGKAFAALVSSMLYEARFGPWFVEPVIGTIDRKTGEVYLCATDLIGAPCEPEDYVCAGTCAESLHGMCEALWRPGLEPEELFEVAAQAMLSACDRDSLSGYGAVAAIVTKDKLVTRLIKGRKD.

Belongs to the peptidase T1B family. In terms of assembly, the 26S proteasome consists of a 20S proteasome core and two 19S regulatory subunits. The 20S proteasome core is composed of 28 subunits that are arranged in four stacked rings, resulting in a barrel-shaped structure. The two end rings are each formed by seven alpha subunits, and the two central rings are each formed by seven beta subunits. The catalytic chamber with the active sites is on the inside of the barrel.

It is found in the cytoplasm. The protein localises to the nucleus. Its function is as follows. Non-catalytic component of the proteasome, a multicatalytic proteinase complex which is characterized by its ability to cleave peptides with Arg, Phe, Tyr, Leu, and Glu adjacent to the leaving group at neutral or slightly basic pH. The proteasome has an ATP-dependent proteolytic activity. This chain is Proteasome subunit beta type-3 (PSB3), found in Trypanosoma brucei brucei.